Reading from the N-terminus, the 132-residue chain is Small ribosomal subunit protein uS8 (132 aa).

It belongs to the universal ribosomal protein uS8 family. As to quaternary structure, part of the 30S ribosomal subunit. Contacts proteins S5 and S12.

In terms of biological role, one of the primary rRNA binding proteins, it binds directly to 16S rRNA central domain where it helps coordinate assembly of the platform of the 30S subunit. In Stenotrophomonas maltophilia (strain R551-3), this protein is Small ribosomal subunit protein uS8.